The chain runs to 313 residues: MTNQGSGPQPAHRSGFVSFVGRPNAGKSTLTNALVGSKVVITSDKPQTTRTVVRGIVHRDDAQLILVDTPGLHRPRTLLGERLNDLVKTTLAEVDVVAVCLPANEKVGPGDRFIVNEMAKIKRTTKVAIATKTDLASPDRIAEHLLDIARLGTETGTEWAEIVPVSAKSGDQVELLADLLVGLLPEGPQLYPDGDLSDAPEEILAAELIREAALEGLRDELPHSVAVVVEEMGLREGRPDAKPLLDIHANVYVERDSQKGIIIGPKGARLRDIGTRARGQIEALLGTPVYLDLHVKIAKDWQRDPRQLRKLGF.

An Era-type G domain is found at 13-186 (RSGFVSFVGR…ADLLVGLLPE (174 aa)). Residues 21 to 28 (GRPNAGKS) are G1. 21–28 (GRPNAGKS) lines the GTP pocket. The G2 stretch occupies residues 47-51 (QTTRT). Residues 68–71 (DTPG) are G3. GTP-binding positions include 68–72 (DTPGL) and 131–134 (TKTD). Residues 131 to 134 (TKTD) are G4. The interval 165–167 (VSA) is G5. The KH type-2 domain occupies 217 to 299 (LRDELPHSVA…YLDLHVKIAK (83 aa)).

This sequence belongs to the TRAFAC class TrmE-Era-EngA-EngB-Septin-like GTPase superfamily. Era GTPase family. Monomer.

Its subcellular location is the cytoplasm. It is found in the cell membrane. Functionally, an essential GTPase that binds both GDP and GTP, with rapid nucleotide exchange. Plays a role in 16S rRNA processing and 30S ribosomal subunit biogenesis and possibly also in cell cycle regulation and energy metabolism. The chain is GTPase Era from Nocardioides sp. (strain ATCC BAA-499 / JS614).